Reading from the N-terminus, the 131-residue chain is MVKNSEHLPWYLGSDSATAASTATDATSADGAASETDAASATDTTSATDPTSATDPIATTNTTGITSSGPTTNGRRGRPYISTPPNRCYDCGRTRSPYWRKGTYNGQVVHLCNACGLNHIKIAKKSSAIFL.

Residues 21 to 55 show a composition bias toward low complexity; sequence STATDATSADGAASETDAASATDTTSATDPTSATD. Residues 21 to 85 are disordered; that stretch reads STATDATSAD…RGRPYISTPP (65 aa). The segment covering 57-74 has biased composition (polar residues); that stretch reads IATTNTTGITSSGPTTNG. Residues 88–115 form a GATA-type zinc finger; the sequence is CYDCGRTRSPYWRKGTYNGQVVHLCNAC.

The chain is GATA zinc finger domain-containing protein 2 (comH) from Dictyostelium discoideum (Social amoeba).